The following is a 358-amino-acid chain: Dual-specificity RNA methyltransferase RlmN (358 aa).

The Proton acceptor role is filled by E86. A Radical SAM core domain is found at 105–338 (RHKRYTICVS…CTIRQSKGLD (234 aa)). A disulfide bridge links C112 with C343. C119, C123, and C126 together coordinate [4Fe-4S] cluster. S-adenosyl-L-methionine contacts are provided by residues 169–170 (GE), S201, 224–226 (SLH), and N300. The S-methylcysteine intermediate role is filled by C343.

Belongs to the radical SAM superfamily. RlmN family. It depends on [4Fe-4S] cluster as a cofactor.

It localises to the cytoplasm. It carries out the reaction adenosine(2503) in 23S rRNA + 2 reduced [2Fe-2S]-[ferredoxin] + 2 S-adenosyl-L-methionine = 2-methyladenosine(2503) in 23S rRNA + 5'-deoxyadenosine + L-methionine + 2 oxidized [2Fe-2S]-[ferredoxin] + S-adenosyl-L-homocysteine. It catalyses the reaction adenosine(37) in tRNA + 2 reduced [2Fe-2S]-[ferredoxin] + 2 S-adenosyl-L-methionine = 2-methyladenosine(37) in tRNA + 5'-deoxyadenosine + L-methionine + 2 oxidized [2Fe-2S]-[ferredoxin] + S-adenosyl-L-homocysteine. Specifically methylates position 2 of adenine 2503 in 23S rRNA and position 2 of adenine 37 in tRNAs. m2A2503 modification seems to play a crucial role in the proofreading step occurring at the peptidyl transferase center and thus would serve to optimize ribosomal fidelity. The sequence is that of Dual-specificity RNA methyltransferase RlmN from Campylobacter hominis (strain ATCC BAA-381 / DSM 21671 / CCUG 45161 / LMG 19568 / NCTC 13146 / CH001A).